The primary structure comprises 60 residues: UPF0434 protein Daci_3569 (60 aa).

Belongs to the UPF0434 family.

The protein is UPF0434 protein Daci_3569 of Delftia acidovorans (strain DSM 14801 / SPH-1).